The sequence spans 442 residues: Cell adhesion molecule 1 (442 aa).

Residues 1–44 (MASVVLPSGSQCAAAAAAAAPPGLRLRLLLLLFSAAALIPTGDG) form the signal peptide. The region spanning 45-139 (QNLFTKDVTV…PPQESYTTIT (95 aa)) is the Ig-like V-type domain. Over 45 to 374 (QNLFTKDVTV…EEGSIRAVDH (330 aa)) the chain is Extracellular. The cysteines at positions 64 and 124 are disulfide-linked. Asn-67, Asn-101, Asn-113, and Asn-165 each carry an N-linked (GlcNAc...) asparagine glycan. Ig-like C2-type domains lie at 144–238 (PRNL…RYLE) and 243–329 (PQVH…YMLY). 2 cysteine pairs are disulfide-bonded: Cys-166-Cys-220 and Cys-267-Cys-313. N-linked (GlcNAc...) asparagine glycosylation is found at Asn-304 and Asn-308. Residues 375 to 395 (AVIGGVVAVVVFAMLCLLIIL) form a helical membrane-spanning segment. At 396 to 442 (GRYFARHKGTYFTHEAKGADDAADADTAIINAEGGQNNSEEKKEYFI) the chain is on the cytoplasmic side. Phosphothreonine is present on Thr-422. Phosphoserine is present on Ser-434.

This sequence belongs to the nectin family. In terms of assembly, homodimer (via Ig-like V-type domain). Interacts with FARP1. Interacts (via Ig-like V-type domain) with CRTAM (via Ig-like V-type domain); the interaction competes with CRTAM homodimerization and CADM1 homodimerization. Interacts (via C-terminus) with EPB41L3/DAL1. The interaction with EPB41L3/DAL1 may act to anchor CADM1 to the actin cytoskeleton. Interacts (via C-terminus) with MPP2 (via PDZ domain). Interacts (via C-terminus) with MPP3 (via PDZ domain); this interaction connects CADM1 with DLG1. Interacts (via C-terminus) with PALS2 (via PDZ domain). (Microbial infection) Interacts with herpes virus 8 proteins vFLIP and vGPCR; these interactions are essential for NF-kappa-B activation. Glycosylation at Asn-67 and Asn-101 promotes adhesive binding and synapse induction.

The protein localises to the cell membrane. It is found in the synapse. Functionally, mediates homophilic cell-cell adhesion in a Ca(2+)-independent manner. Also mediates heterophilic cell-cell adhesion with CADM3 and NECTIN3 in a Ca(2+)-independent manner. Interaction with CRTAM promotes natural killer (NK) cell cytotoxicity and interferon-gamma (IFN-gamma) secretion by CD8+ cells in vitro as well as NK cell-mediated rejection of tumors expressing CADM1 in vivo. In mast cells, may mediate attachment to and promote communication with nerves. CADM1, together with MITF, is essential for development and survival of mast cells in vivo. By interacting with CRTAM and thus promoting the adhesion between CD8+ T-cells and CD8+ dendritic cells, regulates the retention of activated CD8+ T-cell within the draining lymph node. Required for the intestinal retention of intraepithelial CD4+ CD8+ T-cells and, to a lesser extent, intraepithelial and lamina propria CD8+ T-cells and CD4+ T-cells. Interaction with CRTAM promotes the adhesion to gut-associated CD103+ dendritic cells, which may facilitate the expression of gut-homing and adhesion molecules on T-cells and the conversion of CD4+ T-cells into CD4+ CD8+ T-cells. Acts as a synaptic cell adhesion molecule and plays a role in the formation of dendritic spines and in synapse assembly. May be involved in neuronal migration, axon growth, pathfinding, and fasciculation on the axons of differentiating neurons. May play diverse roles in the spermatogenesis including in the adhesion of spermatocytes and spermatids to Sertoli cells and for their normal differentiation into mature spermatozoa. Acts as a tumor suppressor in non-small-cell lung cancer (NSCLC) cells. May contribute to the less invasive phenotypes of lepidic growth tumor cells. (Microbial infection) Induces cell fusion in neuron infected by a neuropathogenic strain of measles. Interacts with measles hemagglutinin to trigger hyperfusogenic F-mediated membrane fusion and presumably transsynaptic cell-to-cell transmission of the virus. The sequence is that of Cell adhesion molecule 1 from Homo sapiens (Human).